A 298-amino-acid polypeptide reads, in one-letter code: Probable mitochondrial 2-oxodicarboxylate carrier (298 aa).

Transmembrane regions (helical) follow at residues 6–26, 62–81, 105–125, 159–179, 203–223, and 267–287; these read IPFP…VLTL, HRLY…KRAL, ALSI…VVPF, ALYN…AGYF, LIAG…FDVI, and VLRL…VIEF. 3 Solcar repeats span residues 6-92, 102-188, and 197-287; these read IPFP…YSKL, SSPA…IRNS, and GEIR…VIEF.

It belongs to the mitochondrial carrier (TC 2.A.29) family.

Its subcellular location is the mitochondrion inner membrane. In terms of biological role, transports C5-C7 oxodicarboxylates across the inner membranes of mitochondria. The sequence is that of Probable mitochondrial 2-oxodicarboxylate carrier from Schizosaccharomyces pombe (strain 972 / ATCC 24843) (Fission yeast).